A 395-amino-acid chain; its full sequence is RNA demethylase ALKBH5 (395 aa).

2 disordered regions span residues 1–28 (MAAA…AGSR) and 47–83 (AAEP…EEEA). Ala2 carries the post-translational modification N-acetylalanine. A Glycyl lysine isopeptide (Lys-Gly) (interchain with G-Cter in ubiquitin) cross-link involves residue Lys58. The segment covering 60–83 (KYQEDSDPERSDYEEHQLQKEEEA) has biased composition (basic and acidic residues). Ser65 and Ser70 each carry phosphoserine. Residues 68 to 117 (ERSDYEEHQLQKEEEARKVKSGIRQIRLFSQDECSKIEARIDEVVSRAEK) are a coiled coil. Tyr72 is subject to Phosphotyrosine. Residue Lys87 forms a Glycyl lysine isopeptide (Lys-Gly) (interchain with G-Cter in SUMO1) linkage. Ser88 bears the Phosphoserine mark. Lys133 is modified (N6-acetyllysine). Tyr140 is a catalytic residue. Residues Asn194, Tyr196, and His205 each contribute to the 2-oxoglutarate site. Cys231 and Cys268 form a disulfide bridge. Position 236 is an N6-acetyllysine (Lys236). Positions 267 and 278 each coordinate 2-oxoglutarate. The disordered stretch occupies residues 294-395 (ETKSLSSSTL…PTRKVKMRRH (102 aa)). A compositionally biased stretch (low complexity) spans 296-306 (KSLSSSTLPPS). Lys322 is covalently cross-linked (Glycyl lysine isopeptide (Lys-Gly) (interchain with G-Cter in SUMO1)). Ser326 bears the Phosphoserine mark. Residue Lys329 forms a Glycyl lysine isopeptide (Lys-Gly) (interchain with G-Cter in SUMO2) linkage. The segment covering 329–350 (KADPDAAHRPRILEMDKEENRR) has biased composition (basic and acidic residues). An Omega-N-methylarginine modification is found at Arg360. Phosphoserine is present on residues Ser362, Ser372, Ser375, and Ser385.

It belongs to the alkB family. Monomer. Interacts with RBM33; promoting desumoylation by SENP1 and recruitment to N(6)-methyladenosine-containing mRNAs. Interacts (when acetylated by KAT8) with PSPC1; interaction facilitates recognition of N(6)-methyladenosine (m6A) mRNA. Fe(2+) serves as cofactor. In terms of processing, phosphorylated at Ser-88 and Ser-326 in response to reactive oxygen species (ROS), promoting sumoylation and inactivation. Acetylated by KAT8 at Lys-236, promoting interaction with PSPC1, thereby facilitating recognition of N(6)-methyladenosine (m6A) mRNA by ALKBH5. Deacetylated at Lys-236 by HDAC7. Post-translationally, sumoylated at Lys-87 and Lys-322 by PIAS4 following phosphorylation at Ser-88 and Ser-326 in response to reactive oxygen species (ROS), inhibiting the RNA demethylase activity. Desumoylated by SENP1; relieving RNA demethylase inhibition, leading to N(6)-methyladenosine-containing mRNAs demethylation. In terms of processing, ubiquitinated at Lys-58 via 'Lys-48'-linked polyubiquitin chain, leading to its degradation by the proteasome. Deubiquitinated at Lys-58 by USP9X, promoting its stabilizazion.

Its subcellular location is the nucleus speckle. It carries out the reaction an N(6)-methyladenosine in mRNA + 2-oxoglutarate + O2 = an adenosine in mRNA + formaldehyde + succinate + CO2. With respect to regulation, RNA demethylase activity is inhibited following sumoylation. Inhibition is relieved following desumoylation. Functionally, dioxygenase that specifically demethylates N(6)-methyladenosine (m6A) RNA, the most prevalent internal modification of messenger RNA (mRNA) in higher eukaryotes. Demethylates RNA by oxidative demethylation, which requires molecular oxygen, alpha-ketoglutarate and iron. Demethylation of m6A mRNA affects mRNA processing, translation and export. Can also demethylate N(6)-methyladenosine in single-stranded DNA (in vitro). Required for the late meiotic and haploid phases of spermatogenesis by mediating m6A demethylation in spermatocytes and round spermatids: m6A demethylation of target transcripts is required for correct splicing and the production of longer 3'-UTR mRNAs in male germ cells. Involved in paraspeckle assembly, a nuclear membraneless organelle, by undergoing liquid-liquid phase separation. Paraspeckle assembly is coupled with m6A demethylation of RNAs, such as NEAT1 non-coding RNA. Also acts as a negative regulator of T-cell development: inhibits gamma-delta T-cell proliferation via demethylation of JAG1 and NOTCH2 transcripts. Inhibits regulatory T-cell (Treg) recruitment by mediating demethylation and destabilization of CCL28 mRNAs. The chain is RNA demethylase ALKBH5 (Alkbh5) from Rattus norvegicus (Rat).